A 289-amino-acid chain; its full sequence is Protoheme IX farnesyltransferase 2 (289 aa).

The next 9 helical transmembrane spans lie at 4–24 (PGIIFGNLISVAGGFLLAAKG), 28–48 (LVLMLASLVGLSLVVASGCAI), 66–86 (RVTVTGEIAVGNVLAFGLALG), 99–118 (ALALLFAVIGYIVYVGVYSL), 124–144 (SVYGTLVGSFSGAVPPVVGYC), 155–175 (AILLLMFSLWQMPHSYAIAIF), 199–219 (LHIVLYIAVFALVSALLPLAG), 221–241 (TGIAFMAVTCATSLWWLAMAL), and 256–276 (QVFGFSIITITALSVTMALDF).

Belongs to the UbiA prenyltransferase family. Protoheme IX farnesyltransferase subfamily.

It is found in the cell inner membrane. The enzyme catalyses heme b + (2E,6E)-farnesyl diphosphate + H2O = Fe(II)-heme o + diphosphate. The protein operates within porphyrin-containing compound metabolism; heme O biosynthesis; heme O from protoheme: step 1/1. Functionally, converts heme B (protoheme IX) to heme O by substitution of the vinyl group on carbon 2 of heme B porphyrin ring with a hydroxyethyl farnesyl side group. In Shewanella baltica (strain OS195), this protein is Protoheme IX farnesyltransferase 2.